A 249-amino-acid chain; its full sequence is Small ribosomal subunit protein uS2 (249 aa).

This sequence belongs to the universal ribosomal protein uS2 family.

The protein is Small ribosomal subunit protein uS2 of Listeria innocua serovar 6a (strain ATCC BAA-680 / CLIP 11262).